The sequence spans 540 residues: Keratin, type II cytoskeletal 73 (540 aa).

The interval 1–131 (MSRQFTYKSG…DPEIQKVRAQ (131 aa)) is head. The tract at residues 132 to 167 (EREQIKVLNNKFASFIDKVRFLEQQNQVLETKWELL) is coil 1A. In terms of domain architecture, IF rod spans 132-445 (EREQIKVLNN…KLLEGEECRM (314 aa)). Residues 168–186 (QQLDLNNCKNNLEPILEGY) are linker 1. The interval 187 to 278 (ISNLRKQLET…CLYEGETAQI (92 aa)) is coil 1B. The tract at residues 279–302 (QSHISDTSIILSMDNNRNLDLDSI) is linker 12. Residues 303 to 441 (IAEVRAQYEE…ATYRKLLEGE (139 aa)) are coil 2. Residues 442–540 (ECRMSGEYTN…LSSPTKKTMR (99 aa)) form a tail region. The interval 502–540 (SGNCSPRGEARTRLGSASEFRDSQGKTLALSSPTKKTMR) is disordered. Over residues 526–540 (GKTLALSSPTKKTMR) the composition is skewed to polar residues.

This sequence belongs to the intermediate filament family. In terms of assembly, heterotetramer of two type I and two type II keratins. In terms of tissue distribution, highly expressed in hair follicles from scalp. In hair, it is specifically present in the inner root sheath (IRS) of the hair follicle. Present in the IRS cuticle, but not in Henle or Huxley layers of the IRS. In the IRS cuticle, it is expressed between the lowermost bulb region of the cuticle and the region where Henle cells undergo abrupt terminal differentiation. Detected up to the uppermost cortex region where cuticle cells terminally differentiate (at protein level).

Functionally, has a role in hair formation. Specific component of keratin intermediate filaments in the inner root sheath (IRS) of the hair follicle. The protein is Keratin, type II cytoskeletal 73 (KRT73) of Homo sapiens (Human).